The primary structure comprises 985 residues: Ephrin type-B receptor 1-A (985 aa).

Residues 1 to 19 form the signal peptide; it reads MELNVLLLLLCLSGGQVGA. Topologically, residues 20-542 are extracellular; that stretch reads VEETLMDTRT…YKSELREQLP (523 aa). In terms of domain architecture, Eph LBD spans 21 to 203; that stretch reads EETLMDTRTA…FFKEMPSVVQ (183 aa). Fibronectin type-III domains are found at residues 324–434 and 435–532; these read VPSG…TNQA and APSS…TAED. N-linked (GlcNAc...) asparagine glycans are attached at residues N336, N428, and N482. The chain crosses the membrane as a helical span at residues 543-563; sequence LTGSAAAGVVFIVSLVAISIV. Residues 564 to 985 are Cytoplasmic-facing; the sequence is CSRKRTYSKE…QITQSPTSIA (422 aa). Residues 620–883 form the Protein kinase domain; it reads VKIEEVIGAG…EIVNTLRPMI (264 aa). Residues 626–634 and K652 each bind ATP; that span reads IGAGEFGEV. The active-site Proton acceptor is D745. The SAM domain occupies 912 to 976; it reads SAFTSVDDWL…LNSIQSMRVQ (65 aa). Residues 983-985 carry the PDZ-binding motif; sequence SIA.

Belongs to the protein kinase superfamily. Tyr protein kinase family. Ephrin receptor subfamily. Heterotetramer upon binding of the ligand. The heterotetramer is composed of an ephrin dimer and a receptor dimer. Oligomerization is probably required to induce biological responses. Phosphorylated. Autophosphorylation is stimulated by ligands.

The protein localises to the cell membrane. Its subcellular location is the early endosome membrane. It is found in the cell projection. The protein resides in the dendrite. It catalyses the reaction L-tyrosyl-[protein] + ATP = O-phospho-L-tyrosyl-[protein] + ADP + H(+). In terms of biological role, receptor tyrosine kinase which binds promiscuously transmembrane ephrin-B family ligands residing on adjacent cells, leading to contact-dependent bidirectional signaling into neighboring cells. The signaling pathway downstream of the receptor is referred to as forward signaling while the signaling pathway downstream of the ephrin ligand is referred to as reverse signaling. May play a role in axon guidance during nervous system development. May also play an important redundant role with other ephrin-B receptors in development and maturation of dendritic spines and synapse formation. More generally, may play a role in targeted cell migration and adhesion. Upon activation by ephrin-B ligands activates the MAPK/ERK and the JNK signaling cascades to regulate cell migration and adhesion respectively. In Xenopus laevis (African clawed frog), this protein is Ephrin type-B receptor 1-A (ephb1-a).